We begin with the raw amino-acid sequence, 258 residues long: Small ribosomal subunit protein uS2 (258 aa).

A disordered region spans residues 226–258 (QGVSNEEVAAEQNIDLDEKEKSEETEATEATEE).

The protein belongs to the universal ribosomal protein uS2 family.

The polypeptide is Small ribosomal subunit protein uS2 (Staphylococcus aureus (strain COL)).